The sequence spans 162 residues: MSFWPQSRKARRRLTILLAIAPVLALAVGLALYGLRDSISLFYTPAQAQEAKVSAGRKVQLGGLVQHGSVVKYPDGNVEFVIADQKATAKVVYHGDLPDLFREGQGIVAEGSFNPAGVFEAKLVLAKHDERYMPREVSKALKEQGEWRGEGADAPAYGSQKP.

Over 1–13 the chain is Cytoplasmic; sequence MSFWPQSRKARRR. Residues 14 to 34 form a helical; Signal-anchor for type II membrane protein membrane-spanning segment; the sequence is LTILLAIAPVLALAVGLALYG. Over 35–162 the chain is Periplasmic; that stretch reads LRDSISLFYT…DAPAYGSQKP (128 aa). Heme is bound by residues His-128 and Tyr-132. The segment covering 140–151 has biased composition (basic and acidic residues); the sequence is ALKEQGEWRGEG. Positions 140-162 are disordered; the sequence is ALKEQGEWRGEGADAPAYGSQKP.

The protein belongs to the CcmE/CycJ family.

Its subcellular location is the cell inner membrane. In terms of biological role, heme chaperone required for the biogenesis of c-type cytochromes. Transiently binds heme delivered by CcmC and transfers the heme to apo-cytochromes in a process facilitated by CcmF and CcmH. The chain is Cytochrome c-type biogenesis protein CcmE from Caulobacter vibrioides (strain ATCC 19089 / CIP 103742 / CB 15) (Caulobacter crescentus).